Reading from the N-terminus, the 356-residue chain is Methylthioribose-1-phosphate isomerase (356 aa).

Residue aspartate 234 is the Proton donor of the active site.

It belongs to the eIF-2B alpha/beta/delta subunits family. MtnA subfamily.

The protein resides in the cytoplasm. Its subcellular location is the nucleus. It carries out the reaction 5-(methylsulfanyl)-alpha-D-ribose 1-phosphate = 5-(methylsulfanyl)-D-ribulose 1-phosphate. The protein operates within amino-acid biosynthesis; L-methionine biosynthesis via salvage pathway; L-methionine from S-methyl-5-thio-alpha-D-ribose 1-phosphate: step 1/6. Its function is as follows. Catalyzes the interconversion of methylthioribose-1-phosphate (MTR-1-P) into methylthioribulose-1-phosphate (MTRu-1-P). This chain is Methylthioribose-1-phosphate isomerase (mri1), found in Schizosaccharomyces japonicus (strain yFS275 / FY16936) (Fission yeast).